The primary structure comprises 653 residues: Transcription factor Ken 1 (653 aa).

The 69-residue stretch at 35 to 103 folds into the BTB domain; sequence TDLLLICDGK…LYSGQVYVRS (69 aa). 4 disordered regions span residues 126–215, 234–305, 429–451, and 512–534; these read NSDG…DRDR, NNHP…SDDA, LSNNNNSSSNNNNNNNRIRPPSA, and ELSARASAAGGGGGGSGGNGSGS. The segment covering 145–157 has biased composition (polar residues); the sequence is NRNTEGITGSSVV. The segment covering 251–272 has biased composition (basic residues); that stretch reads GHHHHHHHHHHHRQLHQIKTRS. The span at 286-299 shows a compositional bias: polar residues; sequence SDPVNLSIVKQQQD. Low complexity predominate over residues 430 to 444; it reads SNNNNSSSNNNNNNN. Positions 520–534 are enriched in gly residues; sequence AGGGGGGSGGNGSGS. 3 C2H2-type zinc fingers span residues 555–577, 583–606, and 619–641; these read YRCEYCGKTFGMSWNLKTHLRVH, FACRLCVAMFKQKAHLLKHLCSVH, and YTCCFCSLVFETLQELVRHLSGH.

It localises to the nucleus. Its function is as follows. Transcription factor required for terminalia development. Negative regulator of the JAK/STAT pathway: represses JAK/STAT-dependent expression of ventral veins lacking (vvl) in the posterior spiracles. The chain is Transcription factor Ken 1 from Culex quinquefasciatus (Southern house mosquito).